A 516-amino-acid chain; its full sequence is 3-phosphoshikimate 1-carboxyvinyltransferase, chloroplastic (516 aa).

A chloroplast-targeting transit peptide spans 1 to 72; it reads MAQINNMAQG…RISASVATAQ (72 aa). Residues K95, S96, and R100 each coordinate 3-phosphoshikimate. Residue K95 coordinates phosphoenolpyruvate. Residues G173 and R203 each coordinate phosphoenolpyruvate. 3-phosphoshikimate contacts are provided by S250, S251, Q252, S278, D403, and K430. Q252 contributes to the phosphoenolpyruvate binding site. The active-site Proton acceptor is D403. Phosphoenolpyruvate contacts are provided by R434, R476, and K501.

This sequence belongs to the EPSP synthase family. Mostly expressed in flower petals, and, to a lower extent, in roots, stems and anthers, but barely in leaves.

The protein resides in the plastid. It localises to the chloroplast. It carries out the reaction 3-phosphoshikimate + phosphoenolpyruvate = 5-O-(1-carboxyvinyl)-3-phosphoshikimate + phosphate. It participates in metabolic intermediate biosynthesis; chorismate biosynthesis; chorismate from D-erythrose 4-phosphate and phosphoenolpyruvate: step 6/7. Competitively inhibited by glyphosate. In terms of biological role, catalyzes the transfer of the enolpyruvyl moiety of phosphoenolpyruvate (PEP) to the 5-hydroxyl of shikimate-3-phosphate (S3P) to produce enolpyruvyl shikimate-3-phosphate and inorganic phosphate. Involved in the accumulation of volatile benzoides in flowers, scent attracting pollinators (e.g. the night-active hawkmoth pollinator Manduca sexta). The sequence is that of 3-phosphoshikimate 1-carboxyvinyltransferase, chloroplastic from Petunia hybrida (Petunia).